A 150-amino-acid chain; its full sequence is 3-hydroxyacyl-[acyl-carrier-protein] dehydratase FabZ (150 aa).

The active site involves H54.

Belongs to the thioester dehydratase family. FabZ subfamily.

The protein localises to the cytoplasm. The enzyme catalyses a (3R)-hydroxyacyl-[ACP] = a (2E)-enoyl-[ACP] + H2O. Its function is as follows. Involved in unsaturated fatty acids biosynthesis. Catalyzes the dehydration of short chain beta-hydroxyacyl-ACPs and long chain saturated and unsaturated beta-hydroxyacyl-ACPs. In Vibrio parahaemolyticus serotype O3:K6 (strain RIMD 2210633), this protein is 3-hydroxyacyl-[acyl-carrier-protein] dehydratase FabZ.